Here is a 680-residue protein sequence, read N- to C-terminus: E3 ubiquitin-protein ligase brl2 (680 aa).

Positions 44-72 form a coiled coil; that stretch reads RSIQFDELESKIEGLQNLAEEKLKVLATL. The tract at residues 206-233 is disordered; the sequence is PQSTKVKEEATTSSKGKDEEKKVSTVEQ. The segment covering 210–229 has biased composition (basic and acidic residues); the sequence is KVKEEATTSSKGKDEEKKVS. Coiled coils occupy residues 261-288, 353-399, and 485-609; these read LDSN…TNLK, MQND…ETMV, and DSLH…LKDT. An RING-type zinc finger spans residues 627-667; it reads CSVCNFERWKDRIISLCGHGFCYQCIQKRIETRQRRCPICG.

The protein belongs to the BRE1 family. Component of the histone H2B ubiquitin ligase complex (HULC) composed of at least brl1, brl2, rhp6 and shf1.

Its subcellular location is the nucleus. The enzyme catalyses S-ubiquitinyl-[E2 ubiquitin-conjugating enzyme]-L-cysteine + [acceptor protein]-L-lysine = [E2 ubiquitin-conjugating enzyme]-L-cysteine + N(6)-ubiquitinyl-[acceptor protein]-L-lysine.. The protein operates within protein modification; protein ubiquitination. In terms of biological role, E3 ubiquitin-protein ligase which belongs to the histone H2B ubiquitin ligase complex (HULC) which mediates monoubiquitination of histone H2B to form H2BK123ub1. H2BK123ub1 gives a specific tag for epigenetic transcriptional activation and is also a prerequisite for H3K4me and H3K79me formation. The sequence is that of E3 ubiquitin-protein ligase brl2 (brl2) from Schizosaccharomyces pombe (strain 972 / ATCC 24843) (Fission yeast).